Here is a 333-residue protein sequence, read N- to C-terminus: L-lactate dehydrogenase B chain (333 aa).

NAD(+)-binding positions include 29 to 57 and arginine 99; that span reads GQVG…LEDK. The substrate site is built by arginine 106, asparagine 138, and arginine 169. Asparagine 138 provides a ligand contact to NAD(+). Histidine 193 serves as the catalytic Proton acceptor. Residue threonine 248 coordinates substrate.

This sequence belongs to the LDH/MDH superfamily. LDH family. Homotetramer.

It localises to the cytoplasm. It carries out the reaction (S)-lactate + NAD(+) = pyruvate + NADH + H(+). Its pathway is fermentation; pyruvate fermentation to lactate; (S)-lactate from pyruvate: step 1/1. In terms of biological role, interconverts simultaneously and stereospecifically pyruvate and lactate with concomitant interconversion of NADH and NAD(+). The polypeptide is L-lactate dehydrogenase B chain (LDHB) (Pelodiscus sinensis japonicus (Chinese soft-shelled turtle)).